Here is a 196-residue protein sequence, read N- to C-terminus: ATP-dependent Clp protease proteolytic subunit (196 aa).

The active-site Nucleophile is serine 98. The active site involves histidine 123.

Belongs to the peptidase S14 family. As to quaternary structure, fourteen ClpP subunits assemble into 2 heptameric rings which stack back to back to give a disk-like structure with a central cavity, resembling the structure of eukaryotic proteasomes.

The protein localises to the cytoplasm. The catalysed reaction is Hydrolysis of proteins to small peptides in the presence of ATP and magnesium. alpha-casein is the usual test substrate. In the absence of ATP, only oligopeptides shorter than five residues are hydrolyzed (such as succinyl-Leu-Tyr-|-NHMec, and Leu-Tyr-Leu-|-Tyr-Trp, in which cleavage of the -Tyr-|-Leu- and -Tyr-|-Trp bonds also occurs).. Its function is as follows. Cleaves peptides in various proteins in a process that requires ATP hydrolysis. Has a chymotrypsin-like activity. Plays a major role in the degradation of misfolded proteins. The chain is ATP-dependent Clp protease proteolytic subunit from Limosilactobacillus fermentum (strain NBRC 3956 / LMG 18251) (Lactobacillus fermentum).